We begin with the raw amino-acid sequence, 335 residues long: DNA polymerase beta (335 aa).

Lys41 participates in a covalent cross-link: Glycyl lysine isopeptide (Lys-Gly) (interchain with G-Cter in ubiquitin). Residue Lys60 coordinates K(+). Residue Lys60 coordinates Na(+). A Glycyl lysine isopeptide (Lys-Gly) (interchain with G-Cter in ubiquitin) cross-link involves residue Lys61. 2 residues coordinate K(+): Leu62 and Val65. 2 residues coordinate Na(+): Leu62 and Val65. Residue Lys72 is the Nucleophile; Schiff-base intermediate with DNA; for 5'-dRP lyase activity of the active site. Lys72 bears the N6-acetyllysine mark. Lys81 participates in a covalent cross-link: Glycyl lysine isopeptide (Lys-Gly) (interchain with G-Cter in ubiquitin). Arg83 carries the post-translational modification Omega-N-methylarginine; by PRMT6. K(+) contacts are provided by Thr101, Val103, and Ile106. Residues Thr101, Val103, and Ile106 each contribute to the Na(+) site. An a 2'-deoxyribonucleoside 5'-triphosphate-binding site is contributed by Arg149. Arg152 is subject to Omega-N-methylarginine; by PRMT6. 4 residues coordinate a 2'-deoxyribonucleoside 5'-triphosphate: Ser180, Arg183, Gly189, and Asp190. Positions 183–192 are DNA-binding; that stretch reads RGAESSGDMD. Mg(2+) contacts are provided by Asp190, Asp192, and Asp256.

The protein belongs to the DNA polymerase type-X family. Monomer. Binds single-stranded DNA (ssDNA). Interacts with APEX1, LIG1, LIG3, FEN1, PCNA and XRCC1. Interacts with HUWE1/ARF-BP1, STUB1/CHIP and USP47. Interacts with FAM168A. The cofactor is Mg(2+). Methylation by PRMT6 stimulates the polymerase activity by enhancing DNA binding and processivity. Post-translationally, ubiquitinated at Lys-41, Lys-61 and Lys-81: monoubiquitinated by HUWE1/ARF-BP1. Monoubiquitinated protein is then the target of STUB1/CHIP, which catalyzes polyubiquitination from monoubiquitin, leading to degradation by the proteasome. USP47 mediates the deubiquitination of monoubiquitinated protein, preventing polyubiquitination by STUB1/CHIP and its subsequent degradation.

The protein localises to the nucleus. It localises to the cytoplasm. The enzyme catalyses DNA(n) + a 2'-deoxyribonucleoside 5'-triphosphate = DNA(n+1) + diphosphate. It catalyses the reaction a 5'-end 2'-deoxyribose-2'-deoxyribonucleotide-DNA = (2E,4S)-4-hydroxypenten-2-al-5-phosphate + a 5'-end 5'-phospho-2'-deoxyribonucleoside-DNA + H(+). The catalysed reaction is 2'-deoxyribonucleotide-(2'-deoxyribose 5'-phosphate)-2'-deoxyribonucleotide-DNA = a 3'-end 2'-deoxyribonucleotide-(2,3-dehydro-2,3-deoxyribose 5'-phosphate)-DNA + a 5'-end 5'-phospho-2'-deoxyribonucleoside-DNA + H(+). Functionally, repair polymerase that plays a key role in base-excision repair. During this process, the damaged base is excised by specific DNA glycosylases, the DNA backbone is nicked at the abasic site by an apurinic/apyrimidic (AP) endonuclease, and POLB removes 5'-deoxyribose-phosphate from the preincised AP site acting as a 5'-deoxyribose-phosphate lyase (5'-dRP lyase); through its DNA polymerase activity, it adds one nucleotide to the 3' end of the arising single-nucleotide gap. Conducts 'gap-filling' DNA synthesis in a stepwise distributive fashion rather than in a processive fashion as for other DNA polymerases. It is also able to cleave sugar-phosphate bonds 3' to an intact AP site, acting as an AP lyase. In Mus musculus (Mouse), this protein is DNA polymerase beta (Polb).